Reading from the N-terminus, the 421-residue chain is Dihydroorotase (421 aa).

His59 and His61 together coordinate Zn(2+). Substrate-binding positions include 61 to 63 (HLR) and Asn93. Zn(2+)-binding residues include Asp150, His177, and His230. Asn276 serves as a coordination point for substrate. A Zn(2+)-binding site is contributed by Asp303. The active site involves Asp303. Substrate is bound at residue His307.

The protein belongs to the metallo-dependent hydrolases superfamily. DHOase family. Class I DHOase subfamily. Requires Zn(2+) as cofactor.

It carries out the reaction (S)-dihydroorotate + H2O = N-carbamoyl-L-aspartate + H(+). It participates in pyrimidine metabolism; UMP biosynthesis via de novo pathway; (S)-dihydroorotate from bicarbonate: step 3/3. Catalyzes the reversible cyclization of carbamoyl aspartate to dihydroorotate. The polypeptide is Dihydroorotase (Desulfotalea psychrophila (strain LSv54 / DSM 12343)).